The chain runs to 332 residues: 4-hydroxyproline 2-epimerase 2 (332 aa).

The active-site Proton acceptor is the C89. Residues H222, D248, and 253–254 contribute to the substrate site; that span reads GT.

Belongs to the proline racemase family.

The catalysed reaction is trans-4-hydroxy-L-proline = cis-4-hydroxy-D-proline. Its function is as follows. Catalyzes the epimerization of trans-4-hydroxy-L-proline (t4LHyp) to cis-4-hydroxy-D-proline (c4DHyp). Is likely involved in a degradation pathway that converts t4LHyp to alpha-ketoglutarate. Displays no proline racemase activity. This Rhizobium rhizogenes (strain K84 / ATCC BAA-868) (Agrobacterium radiobacter) protein is 4-hydroxyproline 2-epimerase 2.